Reading from the N-terminus, the 345-residue chain is tRNA N6-adenosine threonylcarbamoyltransferase (345 aa).

Residues H111 and H115 each coordinate Fe cation. Residues 136-140 (LVSGG), D169, G182, and N279 contribute to the substrate site. D307 serves as a coordination point for Fe cation.

The protein belongs to the KAE1 / TsaD family. The cofactor is Fe(2+).

The protein resides in the cytoplasm. The catalysed reaction is L-threonylcarbamoyladenylate + adenosine(37) in tRNA = N(6)-L-threonylcarbamoyladenosine(37) in tRNA + AMP + H(+). In terms of biological role, required for the formation of a threonylcarbamoyl group on adenosine at position 37 (t(6)A37) in tRNAs that read codons beginning with adenine. Is involved in the transfer of the threonylcarbamoyl moiety of threonylcarbamoyl-AMP (TC-AMP) to the N6 group of A37, together with TsaE and TsaB. TsaD likely plays a direct catalytic role in this reaction. The sequence is that of tRNA N6-adenosine threonylcarbamoyltransferase from Actinobacillus succinogenes (strain ATCC 55618 / DSM 22257 / CCUG 43843 / 130Z).